Consider the following 418-residue polypeptide: Glutamyl-tRNA reductase (418 aa).

Substrate-binding positions include 49 to 52 (TCNR), Ser108, 113 to 115 (EPQ), and Gln119. Cys50 acts as the Nucleophile in catalysis. 188–193 (GAGETI) contacts NADP(+).

This sequence belongs to the glutamyl-tRNA reductase family. Homodimer.

The enzyme catalyses (S)-4-amino-5-oxopentanoate + tRNA(Glu) + NADP(+) = L-glutamyl-tRNA(Glu) + NADPH + H(+). The protein operates within porphyrin-containing compound metabolism; protoporphyrin-IX biosynthesis; 5-aminolevulinate from L-glutamyl-tRNA(Glu): step 1/2. Functionally, catalyzes the NADPH-dependent reduction of glutamyl-tRNA(Glu) to glutamate 1-semialdehyde (GSA). The sequence is that of Glutamyl-tRNA reductase from Aliivibrio salmonicida (strain LFI1238) (Vibrio salmonicida (strain LFI1238)).